The chain runs to 655 residues: p-hydroxybenzoic acid efflux pump subunit AaeB (655 aa).

10 helical membrane-spanning segments follow: residues 13–33, 38–58, 69–89, 93–113, 121–141, 152–172, 370–390, 407–427, 431–451, and 481–501; these read FAVKLASAIVLTLFVGFHFQL, WAVLTAAIVAAGPAFAAGGEP, LRIIGTFIGCIAGLVIIIAMI, LLMILVCCIWAGFCTWISSLV, WGLAGYTALIIVITIQPEPLL, EIVVGIVCAIVADLIFSPRSI, LFWLWTGWTSGSGAMVMIAVV, FIYGTLAALPLGLLYFLVIIP, QSMLLLCLSLAVLGFFLGIEV, and LFLDSALGQIVGCVLAFTVIL.

The protein belongs to the aromatic acid exporter ArAE (TC 2.A.85) family.

It is found in the cell inner membrane. In terms of biological role, forms an efflux pump with AaeA. Could function as a metabolic relief valve, allowing to eliminate certain compounds when they accumulate to high levels in the cell. This is p-hydroxybenzoic acid efflux pump subunit AaeB from Escherichia fergusonii (strain ATCC 35469 / DSM 13698 / CCUG 18766 / IAM 14443 / JCM 21226 / LMG 7866 / NBRC 102419 / NCTC 12128 / CDC 0568-73).